The following is a 430-amino-acid chain: Agropine synthesis reductase (430 aa).

Leucine 203–serine 227 serves as a coordination point for NAD(+). Residue serine 333 coordinates substrate. The active-site Proton acceptor is the tyrosine 346.

It belongs to the short-chain dehydrogenases/reductases (SDR) family.

The protein operates within opine metabolism; mannopine biosynthesis. Reduces deoxy-fructosyl-glutamine to mannopine. The polypeptide is Agropine synthesis reductase (mas1) (Rhizobium rhizogenes (Agrobacterium rhizogenes)).